The following is a 373-amino-acid chain: Bifunctional enzyme IspD/IspF (373 aa).

The tract at residues Met-1–Thr-212 is 2-C-methyl-D-erythritol 4-phosphate cytidylyltransferase. The tract at residues Leu-213–Lys-373 is 2-C-methyl-D-erythritol 2,4-cyclodiphosphate synthase. Asp-219 and His-221 together coordinate a divalent metal cation. Residues Asp-219 to His-221 and His-245 to Ser-246 contribute to the 4-CDP-2-C-methyl-D-erythritol 2-phosphate site. His-253 lines the a divalent metal cation pocket. Residues Asp-267–Gly-269, Tyr-272–Asp-276, Thr-343–Glu-346, Phe-350, and Arg-353 each bind 4-CDP-2-C-methyl-D-erythritol 2-phosphate.

The protein in the N-terminal section; belongs to the IspD/TarI cytidylyltransferase family. IspD subfamily. It in the C-terminal section; belongs to the IspF family. A divalent metal cation serves as cofactor.

It carries out the reaction 2-C-methyl-D-erythritol 4-phosphate + CTP + H(+) = 4-CDP-2-C-methyl-D-erythritol + diphosphate. The catalysed reaction is 4-CDP-2-C-methyl-D-erythritol 2-phosphate = 2-C-methyl-D-erythritol 2,4-cyclic diphosphate + CMP. It participates in isoprenoid biosynthesis; isopentenyl diphosphate biosynthesis via DXP pathway; isopentenyl diphosphate from 1-deoxy-D-xylulose 5-phosphate: step 2/6. The protein operates within isoprenoid biosynthesis; isopentenyl diphosphate biosynthesis via DXP pathway; isopentenyl diphosphate from 1-deoxy-D-xylulose 5-phosphate: step 4/6. Its function is as follows. Bifunctional enzyme that catalyzes the formation of 4-diphosphocytidyl-2-C-methyl-D-erythritol from CTP and 2-C-methyl-D-erythritol 4-phosphate (MEP) (IspD), and catalyzes the conversion of 4-diphosphocytidyl-2-C-methyl-D-erythritol 2-phosphate (CDP-ME2P) to 2-C-methyl-D-erythritol 2,4-cyclodiphosphate (ME-CPP) with a corresponding release of cytidine 5-monophosphate (CMP) (IspF). This is Bifunctional enzyme IspD/IspF from Sulfurovum sp. (strain NBC37-1).